We begin with the raw amino-acid sequence, 364 residues long: tRNA 2-selenouridine synthase (364 aa).

The region spanning 14–137 is the Rhodanese domain; the sequence is LIADTPIIDV…LRQTAIQATI (124 aa). C97 functions as the S-selanylcysteine intermediate in the catalytic mechanism.

This sequence belongs to the SelU family. As to quaternary structure, monomer.

It carries out the reaction 5-methylaminomethyl-2-thiouridine(34) in tRNA + selenophosphate + (2E)-geranyl diphosphate + H2O + H(+) = 5-methylaminomethyl-2-selenouridine(34) in tRNA + (2E)-thiogeraniol + phosphate + diphosphate. It catalyses the reaction 5-methylaminomethyl-2-thiouridine(34) in tRNA + (2E)-geranyl diphosphate = 5-methylaminomethyl-S-(2E)-geranyl-thiouridine(34) in tRNA + diphosphate. The enzyme catalyses 5-methylaminomethyl-S-(2E)-geranyl-thiouridine(34) in tRNA + selenophosphate + H(+) = 5-methylaminomethyl-2-(Se-phospho)selenouridine(34) in tRNA + (2E)-thiogeraniol. The catalysed reaction is 5-methylaminomethyl-2-(Se-phospho)selenouridine(34) in tRNA + H2O = 5-methylaminomethyl-2-selenouridine(34) in tRNA + phosphate. Involved in the post-transcriptional modification of the uridine at the wobble position (U34) of tRNA(Lys), tRNA(Glu) and tRNA(Gln). Catalyzes the conversion of 2-thiouridine (S2U-RNA) to 2-selenouridine (Se2U-RNA). Acts in a two-step process involving geranylation of 2-thiouridine (S2U) to S-geranyl-2-thiouridine (geS2U) and subsequent selenation of the latter derivative to 2-selenouridine (Se2U) in the tRNA chain. This chain is tRNA 2-selenouridine synthase, found in Escherichia coli (strain SE11).